We begin with the raw amino-acid sequence, 360 residues long: Peptide chain release factor 1 (360 aa).

Q235 carries the N5-methylglutamine modification.

Belongs to the prokaryotic/mitochondrial release factor family. Post-translationally, methylated by PrmC. Methylation increases the termination efficiency of RF1.

The protein localises to the cytoplasm. Functionally, peptide chain release factor 1 directs the termination of translation in response to the peptide chain termination codons UAG and UAA. In Burkholderia vietnamiensis (strain G4 / LMG 22486) (Burkholderia cepacia (strain R1808)), this protein is Peptide chain release factor 1.